We begin with the raw amino-acid sequence, 40 residues long: Photosystem I reaction center subunit IX (40 aa).

Residues 4–24 (FFESWPMAAVLWVWLTAGIIV) form a helical membrane-spanning segment.

Belongs to the PsaJ family.

The protein resides in the cellular thylakoid membrane. May help in the organization of the PsaE and PsaF subunits. This is Photosystem I reaction center subunit IX from Prochlorococcus marinus (strain MIT 9313).